The primary structure comprises 23 residues: Acidic phospholipase CHA-E6a (23 aa).

Belongs to the phospholipase A2 family. Group II subfamily. D49 sub-subfamily. Ca(2+) is required as a cofactor. In terms of processing, contains 7 disulfide bonds. In terms of tissue distribution, expressed by the venom gland.

It localises to the secreted. It carries out the reaction a 1,2-diacyl-sn-glycero-3-phosphocholine + H2O = a 1-acyl-sn-glycero-3-phosphocholine + a fatty acid + H(+). Functionally, snake venom phospholipase A2 (PLA2) that shows high lipolytic (1048 umol/mg/min) and weak ADP-induced platelet aggregation activities. Also shows weak anticoagulant activity (IC(50) is less than 1.0 uM). PLA2 catalyzes the calcium-dependent hydrolysis of the 2-acyl groups in 3-sn-phosphoglycerides. The protein is Acidic phospholipase CHA-E6a of Crotalus horridus (Timber rattlesnake).